A 709-amino-acid polypeptide reads, in one-letter code: MKTPISSILKSNGLGIFLYRSFITSTAVSYTYDRQDVRHSQSLSSLKNCNYNGYVAGFPNSIVSLTVCSGLRGMIQFENVSYGIEPVETLSGFIHVIYENTNQQAKIPDLGENQTYSWSDELDYQFRSNMKKSGFAVLRPRYIKTDIVVDKKLFDYMGSDTRVVLQKVIQIIGFINTMFSKLKLTVLINSVEIWSKENRIDFPEAPENLLVQFLHWKHKYRPQHISYLLAFVEHPASTGALYPGNLCKPIYGAAIALYPKGLSLESYSVIVLQLLSIGIGLTYDNADSCHCTGDVCLMTPKAIYSGGVKDFSTCSLDDFKYLSTQDLECLQDLPMERQKKKPSRPRRICGNGILEMNEQCDCGTLKNCTHKKCCDPMSCRLKSKAVCGSGECCGQDCKVKPVNVLCRKSKNECDFEEYCNGNDAYCVPDTFARNGQYCDSGQAFCYSGLCMTSNNQCMNLLGKYVRGASFACYEEFNSRNDRFGNCIRKFCSFENSLCGKLVCTWPFKRLLMKDNMSAAYGQIRDDLCISLYKGGRPLKTTLSTYSDMSERDETFVKDGTICGPDMFCLETQCKETRFLVDFQQCNTSRDCNDHGVCNNFNHCHCDKGYNPPYCESVKGQFGSIDDGHKYYIDEGKSAKQQNRGIHPKQQLQLILYITLPLIMIISAVFIKQSKLSRLCGRERSEGTSCITEDSVSNTKMTTNEGSTLH.

Positions M1–Y98 are excised as a propeptide. Residues M1 to Q649 lie on the Extracellular side of the membrane. Positions R141–P334 constitute a Peptidase M12B domain. Intrachain disulfides connect C247–C329, C289–C314, C291–C296, C406–C426, C585–C597, C591–C603, and C605–C614. Residues R346–N434 enclose the Disintegrin domain. The EGF-like; calcium-binding domain occupies D581–E615. The chain crosses the membrane as a helical span at residues Q650–I670. Topologically, residues K671 to H709 are cytoplasmic. The interval I690 to H709 is disordered.

Interacts with TEX101. In terms of tissue distribution, detected in testis.

Its subcellular location is the membrane. This is a non catalytic metalloprotease-like protein. May play a role in sperm-egg fusion. This Rattus norvegicus (Rat) protein is Disintegrin and metalloproteinase domain-containing protein 5 (Adam5).